Consider the following 232-residue polypeptide: Large ribosomal subunit protein uL1 (232 aa).

The protein belongs to the universal ribosomal protein uL1 family. In terms of assembly, part of the 50S ribosomal subunit.

Functionally, binds directly to 23S rRNA. The L1 stalk is quite mobile in the ribosome, and is involved in E site tRNA release. In terms of biological role, protein L1 is also a translational repressor protein, it controls the translation of the L11 operon by binding to its mRNA. This chain is Large ribosomal subunit protein uL1, found in Dinoroseobacter shibae (strain DSM 16493 / NCIMB 14021 / DFL 12).